We begin with the raw amino-acid sequence, 156 residues long: 6,7-dimethyl-8-ribityllumazine synthase (156 aa).

Residues Phe22, 57 to 59 (AYE), and 81 to 83 (TVI) contribute to the 5-amino-6-(D-ribitylamino)uracil site. 86–87 (GT) serves as a coordination point for (2S)-2-hydroxy-3-oxobutyl phosphate. His89 serves as the catalytic Proton donor. A 5-amino-6-(D-ribitylamino)uracil-binding site is contributed by Phe114. Arg128 is a binding site for (2S)-2-hydroxy-3-oxobutyl phosphate.

The protein belongs to the DMRL synthase family. In terms of assembly, forms an icosahedral capsid composed of 60 subunits, arranged as a dodecamer of pentamers.

The enzyme catalyses (2S)-2-hydroxy-3-oxobutyl phosphate + 5-amino-6-(D-ribitylamino)uracil = 6,7-dimethyl-8-(1-D-ribityl)lumazine + phosphate + 2 H2O + H(+). The protein operates within cofactor biosynthesis; riboflavin biosynthesis; riboflavin from 2-hydroxy-3-oxobutyl phosphate and 5-amino-6-(D-ribitylamino)uracil: step 1/2. Functionally, catalyzes the formation of 6,7-dimethyl-8-ribityllumazine by condensation of 5-amino-6-(D-ribitylamino)uracil with 3,4-dihydroxy-2-butanone 4-phosphate. This is the penultimate step in the biosynthesis of riboflavin. The protein is 6,7-dimethyl-8-ribityllumazine synthase of Escherichia coli O45:K1 (strain S88 / ExPEC).